Consider the following 101-residue polypeptide: Integration host factor subunit beta (101 aa).

The protein belongs to the bacterial histone-like protein family. In terms of assembly, heterodimer of an alpha and a beta chain.

This protein is one of the two subunits of integration host factor, a specific DNA-binding protein that functions in genetic recombination as well as in transcriptional and translational control. The protein is Integration host factor subunit beta of Janthinobacterium sp. (strain Marseille) (Minibacterium massiliensis).